The chain runs to 434 residues: Calcium uptake protein 2, mitochondrial (434 aa).

The transit peptide at 1-22 directs the protein to the mitochondrion; the sequence is MAAAAGSCARVAAWGGKLRRGL. Residues 172–207 form the EF-hand 1 domain; the sequence is KPHSGFHVAFKMLDTDGNEMIEKREFFKLQKIISKQ. 6 residues coordinate Ca(2+): D185, D187, N189, M191, E193, and E196. A Phosphoserine modification is found at S205. Positions 227–262 constitute an EF-hand 2; degenerate domain; that stretch reads EPEINTTLQMRFFGKRGQRKLHYKEFRRFMENLQTE. An EF-hand 3; degenerate domain is found at 293–328; sequence TENKDIYWKNVREKLSAGESISLDEFKSFCHFTTHL. Residues 362-397 form the EF-hand 4 domain; it reads LSNNILDTVFKIFDLDGDECLSHEEFLGVLKNRMHR. D375, D377, D379, C381, and E386 together coordinate Ca(2+).

Belongs to the MICU1 family. MICU2 subfamily. As to quaternary structure, heterodimer; disulfide-linked; heterodimerizes with MICU1. Component of the uniplex complex, composed of MCU, EMRE/SMDT1, MICU1 and MICU2 in a 4:4:1:1 stoichiometry.

Its subcellular location is the mitochondrion intermembrane space. It is found in the mitochondrion inner membrane. Functionally, calcium sensor of the mitochondrial calcium uniporter (MCU) channel, which senses calcium level via its EF-hand domains. MICU1 and MICU2 form a disulfide-linked heterodimer that stimulates and inhibits MCU activity, depending on the concentration of calcium. At low calcium levels, MICU1 occludes the pore of the MCU channel, preventing mitochondrial calcium uptake. At higher calcium levels, calcium-binding to MICU1 and MICU2 induces a conformational change that weakens MCU-MICU1 interactions and moves the MICU1-MICU2 heterodimer away from the pore, allowing calcium permeation through the MCU channel. This is Calcium uptake protein 2, mitochondrial from Homo sapiens (Human).